We begin with the raw amino-acid sequence, 241 residues long: tRNA pseudouridine synthase A (241 aa).

Residue D51 is the Nucleophile of the active site. Y110 serves as a coordination point for substrate.

Belongs to the tRNA pseudouridine synthase TruA family. Homodimer.

The catalysed reaction is uridine(38/39/40) in tRNA = pseudouridine(38/39/40) in tRNA. Functionally, formation of pseudouridine at positions 38, 39 and 40 in the anticodon stem and loop of transfer RNAs. The polypeptide is tRNA pseudouridine synthase A (Campylobacter jejuni subsp. doylei (strain ATCC BAA-1458 / RM4099 / 269.97)).